A 561-amino-acid chain; its full sequence is Centromere protein T (561 aa).

Residues 1-83 (MADHNPDSDS…HIQASGHLEE (83 aa)) are disordered. Residues 18 to 27 (RVLDTADPRT) show a composition bias toward basic and acidic residues. Over residues 34–46 (ARAGARRALLETA) the composition is skewed to low complexity. Residue Ser-47 is modified to Phosphoserine. Thr-85 is subject to Phosphothreonine. Residues 93–421 (ILLTAPESSI…RHHQFLEPAP (329 aa)) are flexible stalk domain. Disordered stretches follow at residues 256-292 (HSLP…PGKP) and 333-457 (AEKK…DPHK). Over residues 276 to 288 (KTQSSGPGLQKNS) the composition is skewed to polar residues. Residues Ser-343, Ser-345, and Ser-356 each carry the phosphoserine modification. The span at 357-367 (RVEEAEGHTEV) shows a compositional bias: basic and acidic residues. A phosphoserine mark is found at Ser-373, Ser-385, Ser-386, and Ser-397. Positions 395 to 407 (AASPESASSTPES) are enriched in low complexity.

This sequence belongs to the CENP-T/CNN1 family. As to quaternary structure, component of the CENPA-CAD complex, composed of CENPI, CENPK, CENPL, CENPO, CENPP, CENPQ, CENPR and CENPS. The CENPA-CAD complex is probably recruited on centromeres by the CENPA-NAC complex, at least composed of CENPA, CENPC, CENPH, CENPM, CENPN, CENPT and CENPU. Identified in a centromeric complex containing histones H2A, H2B, H3 and H4, and at least CENPA, CENPB, CENPC, CENPT, CENPN, HJURP, SUPT16H, SSRP1 and RSF1. Interacts (via N-terminus) with the NDC80 complex. Heterodimer with CENPW; this dimer coassembles with CENPS-CENPX heterodimers at centromeres to form the tetrameric CENP-T-W-S-X complex. Post-translationally, dynamically phosphorylated at Ser-47 and probably also other sites during the cell cycle. Phosphorylated at Ser-47 during G2 phase, metaphase and anaphase, but not during telophase or G1 phase.

It is found in the nucleus. Its subcellular location is the chromosome. The protein localises to the centromere. The protein resides in the kinetochore. Component of the CENPA-NAC (nucleosome-associated) complex, a complex that plays a central role in assembly of kinetochore proteins, mitotic progression and chromosome segregation. The CENPA-NAC complex recruits the CENPA-CAD (nucleosome distal) complex and may be involved in incorporation of newly synthesized CENPA into centromeres. Part of a nucleosome-associated complex that binds specifically to histone H3-containing nucleosomes at the centromere, as opposed to nucleosomes containing CENPA. Component of the heterotetrameric CENP-T-W-S-X complex that binds and supercoils DNA, and plays an important role in kinetochore assembly. CENPT has a fundamental role in kinetochore assembly and function. It is one of the inner kinetochore proteins, with most further proteins binding downstream. Required for normal chromosome organization and normal progress through mitosis. This is Centromere protein T (CENPT) from Homo sapiens (Human).